A 506-amino-acid polypeptide reads, in one-letter code: Alpha-L-fucosidase 1 (506 aa).

The signal sequence occupies residues 1-23 (MNSQITLFFFFFSILSLSQISNS). N-linked (GlcNAc...) asparagine glycosylation is found at N22, N82, N248, N320, N355, and N487.

Belongs to the glycosyl hydrolase 29 family.

It is found in the secreted. The protein localises to the extracellular space. Its subcellular location is the apoplast. It carries out the reaction an alpha-L-fucoside + H2O = L-fucose + an alcohol. Functionally, hydrolyzes both 3- and 4-linked fucoses in Lewis determinants. Not active on neither 2-linked fucose nor on fucose in alpha-1,3-linkage to the innermost GlcNAc. The protein is Alpha-L-fucosidase 1 (FUC1) of Arabidopsis thaliana (Mouse-ear cress).